Here is a 1083-residue protein sequence, read N- to C-terminus: Probable arabinosyltransferase B (1083 aa).

13 consecutive transmembrane segments (helical) span residues 23–45 (VARW…TPLL), 222–239 (FAMM…VALW), 252–274 (LIPA…FLLW), 331–350 (SMWI…LLLS), 357–379 (LGPA…LAAW), 421–443 (TAAF…LAGG), 456–478 (AVGA…TVVF), 525–542 (FGFL…LITL), 555–572 (AWRL…LTFA), 576–598 (WVHH…TVLV), 611–633 (AFLA…WWYV), 648–670 (DGIT…AYYL), and 690–712 (FWAP…MVAG).

Belongs to the emb family.

Its subcellular location is the cell membrane. Its function is as follows. Arabinosyl transferase responsible for the polymerization of arabinose into the arabinan of arabinogalactan. In Mycobacterium leprae (strain TN), this protein is Probable arabinosyltransferase B (embB).